We begin with the raw amino-acid sequence, 146 residues long: Hemoglobin subunit beta (146 aa).

V1 carries the N-acetylvaline modification. Residues 2 to 146 form the Globin domain; it reads HLTADEKAAV…VATALAHKYH (145 aa). T12 is modified (phosphothreonine). S44 carries the phosphoserine modification. K59 bears the N6-acetyllysine mark. H63 provides a ligand contact to heme b. K82 is subject to N6-acetyllysine. Residue H92 coordinates heme b. C93 is subject to S-nitrosocysteine. K144 is subject to N6-acetyllysine.

It belongs to the globin family. Heterotetramer of two alpha chains and two beta chains. As to expression, red blood cells.

In terms of biological role, involved in oxygen transport from the lung to the various peripheral tissues. This is Hemoglobin subunit beta (HBB) from Taphozous georgianus (Sharp-nosed tomb bat).